We begin with the raw amino-acid sequence, 750 residues long: Retron Eco8 OLD nuclease (750 aa).

Positions 1–173 (MTIESIRVKN…IDLYDWNPIW (173 aa)) are ATPase domain N-terminus. 33–37 (NVGKS) contacts ATP. Residues 174–260 (KLISNLNSFN…TQSDGTNSNK (87 aa)) form a dimerization domain region. Positions 261 to 390 (FLETLLHLLI…FSDNEARLFF (130 aa)) are ATPase domain C-terminus. The interval 391–704 (SEYIVFVEGA…SGWVTTFLNY (314 aa)) is toprim domain. Positions 398, 402, 450, 452, 623, and 641 each coordinate a divalent metal cation.

The protein belongs to the class 1 OLD nuclease family. As to quaternary structure, homodimer. The cofactor is a divalent metal cation.

In terms of biological role, probable nuclease member of antiviral defense system retron Eco8, composed of an reverse transcriptase (RT), this nuclease and a non-coding RNA (ncRNA) encoded between them. Expression of retron Eco8 confers protection against bacteriophages T4, T6, T7 and SECphi4, SECphi6 and SECphi18. At multiplicity of infection (MOI) of 0.02 cultures slow growth when infected with SECphi4 but do not collapse, at MOI 2 cultures collapse. When the retron is cloned in another E.coli strain synthesizes msDNA (a branched RNA linked by a 2',5'-phosphodiester bond to a single-stranded DNA). The retron transcript serves as primer and template to the reaction, and codes for the RT. The polypeptide is Retron Eco8 OLD nuclease (Escherichia coli).